The following is a 108-amino-acid chain: UPF0145 protein HDEF_1024 (108 aa).

The protein belongs to the UPF0145 family.

The sequence is that of UPF0145 protein HDEF_1024 from Hamiltonella defensa subsp. Acyrthosiphon pisum (strain 5AT).